Reading from the N-terminus, the 382-residue chain is Succinate--CoA ligase [ADP-forming] subunit beta (382 aa).

Residues Arg-9–Arg-237 enclose the ATP-grasp domain. Residues Lys-45, Gly-52–Gly-54, Ile-94, and Glu-99 each bind ATP. Mg(2+) contacts are provided by Asn-192 and Asp-206. Residues Asn-257 and Gly-314–Thr-316 contribute to the substrate site.

The protein belongs to the succinate/malate CoA ligase beta subunit family. Heterotetramer of two alpha and two beta subunits. It depends on Mg(2+) as a cofactor.

It carries out the reaction succinate + ATP + CoA = succinyl-CoA + ADP + phosphate. The catalysed reaction is GTP + succinate + CoA = succinyl-CoA + GDP + phosphate. The protein operates within carbohydrate metabolism; tricarboxylic acid cycle; succinate from succinyl-CoA (ligase route): step 1/1. In terms of biological role, succinyl-CoA synthetase functions in the citric acid cycle (TCA), coupling the hydrolysis of succinyl-CoA to the synthesis of either ATP or GTP and thus represents the only step of substrate-level phosphorylation in the TCA. The beta subunit provides nucleotide specificity of the enzyme and binds the substrate succinate, while the binding sites for coenzyme A and phosphate are found in the alpha subunit. In Chloroflexus aggregans (strain MD-66 / DSM 9485), this protein is Succinate--CoA ligase [ADP-forming] subunit beta.